The primary structure comprises 448 residues: 26S proteasome regulatory subunit 4 homolog (448 aa).

The span at 1–16 (MGQGTPGGMGKQGGAP) shows a compositional bias: gly residues. 2 disordered regions span residues 1 to 56 (MGQG…AAAR) and 93 to 112 (LRPT…DLRG). 2 stretches are compositionally biased toward basic and acidic residues: residues 17 to 33 (GDRK…RKFE) and 93 to 111 (LRPT…DDLR). 234–241 (GEPGTGKT) contacts ATP.

This sequence belongs to the AAA ATPase family.

Its subcellular location is the cytoplasm. It is found in the nucleus. The 26S proteasome is involved in the ATP-dependent degradation of ubiquitinated proteins. The regulatory (or ATPase) complex confers ATP dependency and substrate specificity to the 26S complex. This Oryza sativa subsp. japonica (Rice) protein is 26S proteasome regulatory subunit 4 homolog (TBP2).